Here is a 1187-residue protein sequence, read N- to C-terminus: Non-receptor tyrosine-protein kinase TYK2 (1187 aa).

One can recognise an FERM domain in the interval 26–431 (GGLKVLLHWA…GYFRLTADSS (406 aa)). A Phosphotyrosine modification is found at Tyr-292. The interval 335 to 366 (KEEGSSGSSGRNPQASLFGKKAKAHKAVGQPA) is disordered. Polar residues predominate over residues 339–349 (SSGSSGRNPQA). Residues 450–529 (GIHGPLLEPF…GRSFPSVREL (80 aa)) form the SH2; atypical domain. Residues Ser-499 and Ser-525 each carry the phosphoserine modification. In terms of domain architecture, Protein kinase 1 spans 589 to 875 (ITQLSHLGQG…LTRLQPHNLA (287 aa)). A Phosphotyrosine modification is found at Tyr-604. The tract at residues 610-629 (VEGSGDPEEGKMDDEDPLVP) is disordered. Positions 614-626 (GDPEEGKMDDEDP) are enriched in acidic residues. Residue Ser-884 is modified to Phosphoserine. A Protein kinase 2 domain is found at 897 to 1176 (LKKIRDLGEG…PILKTVHEKY (280 aa)). ATP-binding positions include 903-911 (LGEGHFGKV) and Lys-930. Asp-1023 functions as the Proton acceptor in the catalytic mechanism. Tyr-1054 carries the phosphotyrosine; by autocatalysis modification. Tyr-1055 carries the post-translational modification Phosphotyrosine.

This sequence belongs to the protein kinase superfamily. Tyr protein kinase family. JAK subfamily. In terms of assembly, interacts (via FERM domain) with JAKMIP1. Interacts with PIK3R1; this interaction is important for cell migration. Interacts with MPL/TPOR. As to quaternary structure, (Microbial infection) Interacts with Epstein-Barr virus protein LMP1; this interaction inhibits TYK2-mediated interferon signaling. (Microbial infection) Interacts with papillomavirus-18 protein E6; this interaction impairs JAK-STAT activation by interferon-alpha. In terms of assembly, (Microbial infection) Interacts with Epstein-Barr virus (EBV) tegument protein BGLF2; this interaction participates in the inhibition of type I IFN signaling by the virus. Phosphorylated. Phosphorylation by JAK1 at Tyr-1054 and Tyr-1055 induces kinase activation. In terms of tissue distribution, observed in all cell lines analyzed. Expressed in a variety of lymphoid and non-lymphoid cell lines.

It catalyses the reaction L-tyrosyl-[protein] + ATP = O-phospho-L-tyrosyl-[protein] + ADP + H(+). The protein kinase 1 domain (also termed pseudokinase domain) mediates autoinhibition of the TYK2 kinase domain. Its function is as follows. Tyrosine kinase of the non-receptor type involved in numerous cytokines and interferons signaling, which regulates cell growth, development, cell migration, innate and adaptive immunity. Plays both structural and catalytic roles in numerous interleukins and interferons (IFN-alpha/beta) signaling. Associates with heterodimeric cytokine receptor complexes and activates STAT family members including STAT1, STAT3, STAT4 or STAT6. The heterodimeric cytokine receptor complexes are composed of (1) a TYK2-associated receptor chain (IFNAR1, IL12RB1, IL10RB or IL13RA1), and (2) a second receptor chain associated either with JAK1 or JAK2. In response to cytokine-binding to receptors, phosphorylates and activates receptors (IFNAR1, IL12RB1, IL10RB or IL13RA1), creating docking sites for STAT members. In turn, recruited STATs are phosphorylated by TYK2 (or JAK1/JAK2 on the second receptor chain), form homo- and heterodimers, translocate to the nucleus, and regulate cytokine/growth factor responsive genes. Negatively regulates STAT3 activity by promototing phosphorylation at a specific tyrosine that differs from the site used for signaling. In Homo sapiens (Human), this protein is Non-receptor tyrosine-protein kinase TYK2 (TYK2).